Reading from the N-terminus, the 492-residue chain is Protein GvpD2 (492 aa).

An ATP-binding site is contributed by 39–46 (GAPGTGKT). A compositionally biased stretch (basic and acidic residues) spans 355–368 (RDHDDAVDPDRLPG). The interval 355–379 (RDHDDAVDPDRLPGHDTTPTEHGTL) is disordered.

It belongs to the gas vesicle GvpD family. Homodimer. Interacts with GvpE, also with GvpE from H.mediterranei.

The protein resides in the cytoplasm. Causes a decrease in the amount of GvpE protein. Gas vesicles are hollow, gas filled proteinaceous nanostructures found in several microbial planktonic microorganisms. They allow positioning of halobacteria at the optimal depth for growth in the poorly aerated, shallow brine pools of their habitat. Its function is as follows. Expression of 2 c-vac DNA fragments containing 2 divergently transcribed regions (gvpE-gvpF-gvpG-gvpH-gvpI-gvpJ-gvpK-gvpL-gvpM and gvpA-gvpC-gvpN-gvpO) allows H.volcanii to produce gas vesicles. The sequence is that of Protein GvpD2 from Halobacterium salinarum (strain ATCC 700922 / JCM 11081 / NRC-1) (Halobacterium halobium).